A 59-amino-acid chain; its full sequence is Small, acid-soluble spore protein H (59 aa).

The protein belongs to the SspH family.

It localises to the spore core. The polypeptide is Small, acid-soluble spore protein H (Bacillus licheniformis (strain ATCC 14580 / DSM 13 / JCM 2505 / CCUG 7422 / NBRC 12200 / NCIMB 9375 / NCTC 10341 / NRRL NRS-1264 / Gibson 46)).